The following is an 88-amino-acid chain: Putative cancer susceptibility gene HEPN1 protein (88 aa).

Expressed in liver. Expression is either down-regulated or lost in hepatocellular carcinomas (HCC).

It is found in the cytoplasm. The polypeptide is Putative cancer susceptibility gene HEPN1 protein (HEPN1) (Homo sapiens (Human)).